The sequence spans 66 residues: Photosystem II reaction center protein J (66 aa).

A helical membrane pass occupies residues 37–57; that stretch reads LWLVATAGGMAVIFVVGLFFY.

The protein belongs to the PsbJ family. PSII is composed of 1 copy each of membrane proteins PsbA, PsbB, PsbC, PsbD, PsbE, PsbF, PsbH, PsbI, PsbJ, PsbK, PsbL, PsbM, PsbT, PsbX, PsbY, PsbZ, Psb30/Ycf12, peripheral proteins PsbO, CyanoQ (PsbQ), PsbU, PsbV and a large number of cofactors. It forms dimeric complexes.

It is found in the cellular thylakoid membrane. Its function is as follows. One of the components of the core complex of photosystem II (PSII). PSII is a light-driven water:plastoquinone oxidoreductase that uses light energy to abstract electrons from H(2)O, generating O(2) and a proton gradient subsequently used for ATP formation. It consists of a core antenna complex that captures photons, and an electron transfer chain that converts photonic excitation into a charge separation. The sequence is that of Photosystem II reaction center protein J from Synechococcus sp. (strain CC9311).